A 415-amino-acid polypeptide reads, in one-letter code: WD-40 repeat-containing protein MSI2 (415 aa).

WD repeat units follow at residues 166-206, 215-255, 258-298, 302-342, and 361-401; these read GHDK…QDKV, GHES…MQHQ, VHER…APLH, SHEG…EEQL, and GHKA…YRDE. Positions 232–248 match the DWD box motif; sequence LFGSAGEDGRLVIWDTR.

The protein belongs to the WD repeat RBAP46/RBAP48/MSI1 family.

It is found in the nucleus. Its function is as follows. Core histone-binding subunit that may target chromatin assembly factors, chromatin remodeling factors and histone deacetylases to their histone substrates in a manner that is regulated by nucleosomal DNA. This chain is WD-40 repeat-containing protein MSI2 (MSI2), found in Arabidopsis thaliana (Mouse-ear cress).